Reading from the N-terminus, the 643-residue chain is Nucleolar GTP-binding protein 1 (643 aa).

Residues 168 to 340 enclose the OBG-type G domain; it reads RTLLICGYPN…VRNKACEKLL (173 aa). Residues 174-181, 220-224, and 288-291 each bind GTP; these read GYPNVGKS, DTPGI, and NKTD. Residues 568–643 are disordered; the sequence is GDQEDSAPAG…KRGVGKTDFR (76 aa). Residues 594-622 show a composition bias toward basic and acidic residues; that stretch reads MRSKAERMAKLERRERNRMARAGESDRHA.

Belongs to the TRAFAC class OBG-HflX-like GTPase superfamily. OBG GTPase family. NOG subfamily.

The protein resides in the nucleus. It localises to the nucleolus. Its function is as follows. Involved in the biogenesis of the 60S ribosomal subunit. The protein is Nucleolar GTP-binding protein 1 (NOG1) of Kluyveromyces lactis (strain ATCC 8585 / CBS 2359 / DSM 70799 / NBRC 1267 / NRRL Y-1140 / WM37) (Yeast).